The sequence spans 342 residues: Ubiquitin fusion degradation protein 1 homolog (342 aa).

Disordered regions lie at residues 245–276 (FGGA…SNAA) and 318–342 (EKEA…RGAR). Residues 259-275 (SSSVSLSDGTGVSTSNA) are compositionally biased toward polar residues.

This sequence belongs to the UFD1 family. In terms of assembly, forms a complex composed of ubxn-3, ufd-1, npl-4.1 and cdc-48.1; within the complex interacts with cdc-48.1. Interacts with cdc-48.2. Interacts with npl-4.1 and/or npl-4.2.

The protein resides in the cytoplasm. It localises to the nucleus. Functionally, functions at a post-ubiquitination step in the ubiquitin fusion degradation (UFD) pathway. In association with npl-4.1 and/or npl-4.2 and ATPase cdc-48.1 and/or cdc-48.2, involved in the cytoplasmic elimination of misfolded proteins exported from the ER. This pathway, known as ERAD, prevents the activation of the unfolded protein response (UPR) caused by the accumulation of misfolded proteins in the ER. During S phase and in association with npl-4.1 and/or npl-4.2, cdc-48.1 and/or cdc-48.2 and ubxn-3, ensures the degradation of DNA licensing factor cdt-1 after the initiation of DNA replication and thus the disassembly of the DNA replication CMG helicase complex by promoting the dissociation from chromatin of several of its components including cdc-45 and sld-5. Regulates ubxn-3 nuclear localization during S phase. In Caenorhabditis elegans, this protein is Ubiquitin fusion degradation protein 1 homolog (ufd-1).